The chain runs to 285 residues: Bifunctional protein FolD (285 aa).

NADP(+) is bound by residues 165-167 (GRS) and serine 190.

It belongs to the tetrahydrofolate dehydrogenase/cyclohydrolase family. In terms of assembly, homodimer.

It catalyses the reaction (6R)-5,10-methylene-5,6,7,8-tetrahydrofolate + NADP(+) = (6R)-5,10-methenyltetrahydrofolate + NADPH. The catalysed reaction is (6R)-5,10-methenyltetrahydrofolate + H2O = (6R)-10-formyltetrahydrofolate + H(+). It participates in one-carbon metabolism; tetrahydrofolate interconversion. Catalyzes the oxidation of 5,10-methylenetetrahydrofolate to 5,10-methenyltetrahydrofolate and then the hydrolysis of 5,10-methenyltetrahydrofolate to 10-formyltetrahydrofolate. The protein is Bifunctional protein FolD of Burkholderia mallei (strain NCTC 10247).